A 307-amino-acid polypeptide reads, in one-letter code: tRNA pseudouridine synthase B (307 aa).

D38 serves as the catalytic Nucleophile.

The protein belongs to the pseudouridine synthase TruB family. Type 1 subfamily.

The enzyme catalyses uridine(55) in tRNA = pseudouridine(55) in tRNA. In terms of biological role, responsible for synthesis of pseudouridine from uracil-55 in the psi GC loop of transfer RNAs. This chain is tRNA pseudouridine synthase B, found in Bacillus cereus (strain ATCC 14579 / DSM 31 / CCUG 7414 / JCM 2152 / NBRC 15305 / NCIMB 9373 / NCTC 2599 / NRRL B-3711).